Consider the following 366-residue polypeptide: MALCGLPEFTLLLLPLLARLSAGDCPCSEAALCQPIRHRPDFEVFVFDVGQKTWKSYDWSQITTVAAFGKYDPELMCYAHSKGARVVLKGDISLKNIIDPTFRASWIAQKVDLAKAQYMDGINIDIEQEVNCSSPEYEALTALVKETTESFQREIEGSQVTFDVAWSPKRIDKRCYNYTGIADACDFLFVMSYDEQSQIWSECIAAANAPYNQTLTGYIDYIKMGISPKKLVMGVPWYGYDYICLNLSKDDICTITKVPFRGAPCSDAAGHQVPYKVIMKQVNGSVSGSQWNKDQQAPYYNYKDPAGRFHQVWYDNPQSISLKAAYVKNYGLRGIGMWNANCLDYSDDALAREQTQEMWGALKPRL.

The N-terminal stretch at methionine 1–alanine 22 is a signal peptide. The region spanning glycine 23–leucine 366 is the GH18 domain. The Proton donor role is filled by glutamate 127. Asparagine 131, asparagine 177, asparagine 212, asparagine 246, and asparagine 283 each carry an N-linked (GlcNAc...) asparagine glycan.

The protein belongs to the glycosyl hydrolase 18 family.

It localises to the lysosome. Functionally, involved in the degradation of asparagine-linked glycoproteins. Hydrolyze of N-acetyl-beta-D-glucosamine (1-4)N-acetylglucosamine chitobiose core from the reducing end of the bond, it requires prior cleavage by glycosylasparaginase. This Mus musculus (Mouse) protein is Di-N-acetylchitobiase (Ctbs).